The following is a 621-amino-acid chain: DDB1- and CUL4-associated factor 10 homolog (621 aa).

WD repeat units follow at residues 46–85, 89–127, 131–170, and 176–215; these read GRTG…EIFK, AHTD…QKLR, GHSN…EQGL, and FHAS…TLHK. Disordered regions lie at residues 305-349 and 437-483; these read VRSE…PRQA and LMGS…TTVR. Ser307 bears the Phosphoserine mark. Polar residues predominate over residues 324-342; it reads STTLASRSSLNESQDQDTV. Positions 454 to 478 are enriched in low complexity; it reads ESNQSSSSSSSSSSSSSSSSSSNNS. Residues Ser494 and Ser497 each carry the phosphoserine modification. A WD 5 repeat occupies 588-621; that stretch reads EHQDVVLCAKFSPREPLLVTGCNGGEVTWYRPNL.

This sequence belongs to the WD repeat DCAF10 family.

This is DDB1- and CUL4-associated factor 10 homolog from Drosophila melanogaster (Fruit fly).